Reading from the N-terminus, the 144-residue chain is Acidic phospholipase A2 (144 aa).

The signal sequence occupies residues 1–19; the sequence is MYPAHLLVLLAVCVSLLGA. Positions 20-27 are excised as a propeptide; that stretch reads SDIPPLPL. Cystine bridges form between C38-C98, C54-C143, C56-C72, C71-C125, C78-C118, C87-C111, and C105-C116. Y55, G57, and G59 together coordinate Ca(2+). Residue H75 is part of the active site. D76 contributes to the Ca(2+) binding site. Residue D119 is part of the active site.

This sequence belongs to the phospholipase A2 family. Group I subfamily. D49 sub-subfamily. Ca(2+) is required as a cofactor. Expressed by the venom gland.

The protein resides in the secreted. The catalysed reaction is a 1,2-diacyl-sn-glycero-3-phosphocholine + H2O = a 1-acyl-sn-glycero-3-phosphocholine + a fatty acid + H(+). Its function is as follows. PLA2 catalyzes the calcium-dependent hydrolysis of the 2-acyl groups in 3-sn-phosphoglycerides. The sequence is that of Acidic phospholipase A2 from Aipysurus laevis (Olive sea snake).